A 122-amino-acid chain; its full sequence is Large ribosomal subunit protein uL14 (122 aa).

This sequence belongs to the universal ribosomal protein uL14 family. In terms of assembly, part of the 50S ribosomal subunit. Forms a cluster with proteins L3 and L19. In the 70S ribosome, L14 and L19 interact and together make contacts with the 16S rRNA in bridges B5 and B8.

Functionally, binds to 23S rRNA. Forms part of two intersubunit bridges in the 70S ribosome. The protein is Large ribosomal subunit protein uL14 of Syntrophomonas wolfei subsp. wolfei (strain DSM 2245B / Goettingen).